Consider the following 486-residue polypeptide: Glutamyl-tRNA(Gln) amidotransferase subunit A (486 aa).

Residues K78 and S153 each act as charge relay system in the active site. S177 serves as the catalytic Acyl-ester intermediate.

The protein belongs to the amidase family. GatA subfamily. In terms of assembly, heterotrimer of A, B and C subunits.

The catalysed reaction is L-glutamyl-tRNA(Gln) + L-glutamine + ATP + H2O = L-glutaminyl-tRNA(Gln) + L-glutamate + ADP + phosphate + H(+). Its function is as follows. Allows the formation of correctly charged Gln-tRNA(Gln) through the transamidation of misacylated Glu-tRNA(Gln) in organisms which lack glutaminyl-tRNA synthetase. The reaction takes place in the presence of glutamine and ATP through an activated gamma-phospho-Glu-tRNA(Gln). The polypeptide is Glutamyl-tRNA(Gln) amidotransferase subunit A (Syntrophobacter fumaroxidans (strain DSM 10017 / MPOB)).